The sequence spans 948 residues: Protocadherin alpha-2 (948 aa).

The signal sequence occupies residues Met-1–Ala-22. Residues Ala-23–Asn-697 lie on the Extracellular side of the membrane. Cadherin domains follow at residues Gln-30–Phe-133, Ala-157–Phe-242, Ala-243–Val-350, Ser-351–Phe-455, Ala-456–Leu-565, and Gly-588–Ala-678. Residues Asn-257, Asn-265, Asn-362, and Asn-548 are each glycosylated (N-linked (GlcNAc...) asparagine). The chain crosses the membrane as a helical span at residues Val-698 to Tyr-718. Topologically, residues Thr-719–Gln-948 are cytoplasmic. Residues Pro-734–Pro-737 form a PXXP 1 repeat. The interval Pro-734–Pro-892 is 5 X 4 AA repeats of P-X-X-P. Disordered regions lie at residues Arg-755 to Asn-801, Gly-829 to Pro-854, and Lys-868 to Gln-948. The span at Ala-783–Gly-795 shows a compositional bias: basic and acidic residues. PXXP repeat units lie at residues Pro-797 to Pro-800, Pro-830 to Pro-833, Pro-871 to Pro-874, and Pro-889 to Pro-892. The segment covering Asp-907–Lys-921 has biased composition (basic and acidic residues).

It localises to the cell membrane. Potential calcium-dependent cell-adhesion protein. May be involved in the establishment and maintenance of specific neuronal connections in the brain. The protein is Protocadherin alpha-2 (PCDHA2) of Pan troglodytes (Chimpanzee).